We begin with the raw amino-acid sequence, 376 residues long: F-box/kelch-repeat protein At1g67480 (376 aa).

The 49-residue stretch at 37-85 (DPLIPGLPDDVAKQCLALVPRARFPSMGSVCKKWRFVVQSKEFITVRRL) folds into the F-box domain. Kelch repeat units lie at residues 139 to 189 (KLLV…EVNG), 190 to 237 (HVYV…AFNG), 239 to 289 (LYVM…LFCI), and 291 to 335 (WKNH…LLFS).

This chain is F-box/kelch-repeat protein At1g67480, found in Arabidopsis thaliana (Mouse-ear cress).